The primary structure comprises 120 residues: Cytochrome c6 (120 aa).

Residues 1–35 form the signal peptide; that stretch reads MFKLFNQASRIFFGIALPCLIFLGGIFSLGNTALA. Cys-49, Cys-52, His-53, and Met-93 together coordinate heme c.

Belongs to the cytochrome c family. PetJ subfamily. As to quaternary structure, monomer. Post-translationally, binds 1 heme c group covalently per subunit.

The protein localises to the cellular thylakoid lumen. Functions as an electron carrier between membrane-bound cytochrome b6-f and photosystem I in oxygenic photosynthesis. In Synechocystis sp. (strain ATCC 27184 / PCC 6803 / Kazusa), this protein is Cytochrome c6 (petJ).